The following is a 457-amino-acid chain: ATP-dependent protease ATPase subunit HslU (457 aa).

Residues valine 21, 63–68 (GVGKTE), aspartate 269, glutamate 335, and arginine 407 contribute to the ATP site.

Belongs to the ClpX chaperone family. HslU subfamily. As to quaternary structure, a double ring-shaped homohexamer of HslV is capped on each side by a ring-shaped HslU homohexamer. The assembly of the HslU/HslV complex is dependent on binding of ATP.

It localises to the cytoplasm. Functionally, ATPase subunit of a proteasome-like degradation complex; this subunit has chaperone activity. The binding of ATP and its subsequent hydrolysis by HslU are essential for unfolding of protein substrates subsequently hydrolyzed by HslV. HslU recognizes the N-terminal part of its protein substrates and unfolds these before they are guided to HslV for hydrolysis. The sequence is that of ATP-dependent protease ATPase subunit HslU from Desulfotalea psychrophila (strain LSv54 / DSM 12343).